The sequence spans 564 residues: 2-succinyl-5-enolpyruvyl-6-hydroxy-3-cyclohexene-1-carboxylate synthase (564 aa).

The protein belongs to the TPP enzyme family. MenD subfamily. In terms of assembly, homodimer. Requires Mg(2+) as cofactor. Mn(2+) serves as cofactor. It depends on thiamine diphosphate as a cofactor.

The catalysed reaction is isochorismate + 2-oxoglutarate + H(+) = 5-enolpyruvoyl-6-hydroxy-2-succinyl-cyclohex-3-ene-1-carboxylate + CO2. It functions in the pathway quinol/quinone metabolism; 1,4-dihydroxy-2-naphthoate biosynthesis; 1,4-dihydroxy-2-naphthoate from chorismate: step 2/7. Its pathway is quinol/quinone metabolism; menaquinone biosynthesis. Its function is as follows. Catalyzes the thiamine diphosphate-dependent decarboxylation of 2-oxoglutarate and the subsequent addition of the resulting succinic semialdehyde-thiamine pyrophosphate anion to isochorismate to yield 2-succinyl-5-enolpyruvyl-6-hydroxy-3-cyclohexene-1-carboxylate (SEPHCHC). The chain is 2-succinyl-5-enolpyruvyl-6-hydroxy-3-cyclohexene-1-carboxylate synthase from Photorhabdus laumondii subsp. laumondii (strain DSM 15139 / CIP 105565 / TT01) (Photorhabdus luminescens subsp. laumondii).